The chain runs to 185 residues: Ribosome-recycling factor (185 aa).

It belongs to the RRF family.

It localises to the cytoplasm. Functionally, responsible for the release of ribosomes from messenger RNA at the termination of protein biosynthesis. May increase the efficiency of translation by recycling ribosomes from one round of translation to another. The protein is Ribosome-recycling factor of Vibrio parahaemolyticus serotype O3:K6 (strain RIMD 2210633).